The primary structure comprises 660 residues: Bifunctional polymyxin resistance protein ArnA (660 aa).

Residues 1 to 304 (MKAVIFAYHD…TLGLVAGARL (304 aa)) are formyltransferase ArnAFT. Catalysis depends on H104, which acts as the Proton donor; for formyltransferase activity. (6R)-10-formyltetrahydrofolate contacts are provided by residues R114 and 136–140 (VKRAD). The interval 314–660 (RRIRVLILGV…RSVDVAERAS (347 aa)) is dehydrogenase ArnADH. NAD(+) is bound by residues D347 and 368-369 (DI). UDP-alpha-D-glucuronate-binding positions include A393, Y398, and 432–433 (TS). E434 serves as the catalytic Proton acceptor; for decarboxylase activity. UDP-alpha-D-glucuronate-binding positions include R460, N492, 526-535 (KLIDGGQQKR), and Y613. The Proton donor; for decarboxylase activity role is filled by R619.

The protein in the N-terminal section; belongs to the Fmt family. UDP-L-Ara4N formyltransferase subfamily. This sequence in the C-terminal section; belongs to the NAD(P)-dependent epimerase/dehydratase family. UDP-glucuronic acid decarboxylase subfamily. In terms of assembly, homohexamer, formed by a dimer of trimers.

The catalysed reaction is UDP-alpha-D-glucuronate + NAD(+) = UDP-beta-L-threo-pentopyranos-4-ulose + CO2 + NADH. It catalyses the reaction UDP-4-amino-4-deoxy-beta-L-arabinose + (6R)-10-formyltetrahydrofolate = UDP-4-deoxy-4-formamido-beta-L-arabinose + (6S)-5,6,7,8-tetrahydrofolate + H(+). It participates in nucleotide-sugar biosynthesis; UDP-4-deoxy-4-formamido-beta-L-arabinose biosynthesis; UDP-4-deoxy-4-formamido-beta-L-arabinose from UDP-alpha-D-glucuronate: step 1/3. The protein operates within nucleotide-sugar biosynthesis; UDP-4-deoxy-4-formamido-beta-L-arabinose biosynthesis; UDP-4-deoxy-4-formamido-beta-L-arabinose from UDP-alpha-D-glucuronate: step 3/3. It functions in the pathway bacterial outer membrane biogenesis; lipopolysaccharide biosynthesis. In terms of biological role, bifunctional enzyme that catalyzes the oxidative decarboxylation of UDP-glucuronic acid (UDP-GlcUA) to UDP-4-keto-arabinose (UDP-Ara4O) and the addition of a formyl group to UDP-4-amino-4-deoxy-L-arabinose (UDP-L-Ara4N) to form UDP-L-4-formamido-arabinose (UDP-L-Ara4FN). The modified arabinose is attached to lipid A and is required for resistance to polymyxin and cationic antimicrobial peptides. This chain is Bifunctional polymyxin resistance protein ArnA, found in Salmonella enteritidis PT4 (strain P125109).